The following is a 182-amino-acid chain: CDP-diacylglycerol--glycerol-3-phosphate 3-phosphatidyltransferase (182 aa).

Topologically, residues 2–12 are cytoplasmic; sequence QFNIPTLLTLF. Residues 13–37 form a helical membrane-spanning segment; that stretch reads RVILIPFFVVVFYLPFAWAPMVSAL. Topologically, residues 38-60 are periplasmic; that stretch reads IFCIAAITDWFDGFLARRWNQST. The chain crosses the membrane as a helical span at residues 61-81; sequence RFGAFLDPVADKVLVAIAMVL. The Cytoplasmic segment spans residues 82–86; sequence VTEHY. Residues 87 to 107 form a helical membrane-spanning segment; it reads HSWWVTLPAATMIAREIIISA. The Periplasmic portion of the chain corresponds to 108–145; it reads LREWMAELGKRSSVAVSWIGKVKTTAQMVALAWLLWRP. The helical transmembrane segment at 146–168 threads the bilayer; the sequence is NIWVEYAGIALFFVAAVLTLWSM. Over 169–181 the chain is Cytoplasmic; sequence LQYLSAARGDLLD.

The protein belongs to the CDP-alcohol phosphatidyltransferase class-I family.

Its subcellular location is the cell inner membrane. The catalysed reaction is a CDP-1,2-diacyl-sn-glycerol + sn-glycerol 3-phosphate = a 1,2-diacyl-sn-glycero-3-phospho-(1'-sn-glycero-3'-phosphate) + CMP + H(+). It participates in phospholipid metabolism; phosphatidylglycerol biosynthesis; phosphatidylglycerol from CDP-diacylglycerol: step 1/2. Functionally, catalyzes the conversion of cytidine diphosphate diacylglycerol (CDP-DG) and glycerol 3-phosphate into phosphatidylglycerol. Essential for the synthesis of anionic phospholipids, thereby playing a role in balancing the ratio of zwitterionic and anionic phospholipids, which is thought to be important for normal membrane function. The protein is CDP-diacylglycerol--glycerol-3-phosphate 3-phosphatidyltransferase of Salmonella paratyphi A (strain ATCC 9150 / SARB42).